A 1261-amino-acid chain; its full sequence is Rho GTPase-activating protein 29 (1261 aa).

Phosphoserine occurs at positions 171, 176, 179, and 190. Residues 192 to 462 (LELDNVLLKN…SAKLYDPGQE (271 aa)) enclose the F-BAR domain. Positions 296-418 (RKNEMEKQRK…EILAQLRTLV (123 aa)) form a coiled coil. The disordered stretch occupies residues 481-501 (NVNKHLNSSQPSGFGPANSLE). A phosphoserine mark is found at serine 499, serine 519, and serine 552. Residues 541-559 (SESTGGSSESRSLDSESIS) are compositionally biased toward low complexity. The interval 541-600 (SESTGGSSESRSLDSESISPGDFHRKLPRTPSSGTMSSADDLDEREPPSPSETGPNSLGT) is disordered. The Phorbol-ester/DAG-type zinc-finger motif lies at 612–657 (THKFRKLRSPTKCRDCEGIVVFQGVECEECLLVCHRKCLENLVIIC). In terms of domain architecture, Rho-GAP spans 671–886 (AEFTQVAKKE…FLITYSQKIF (216 aa)). Residues serine 913 and serine 949 each carry the phosphoserine modification. The interval 981 to 1011 (SASQKIEDGKTPKPLSLKSDRSTNNVERHTP) is disordered. Positions 998–1010 (KSDRSTNNVERHT) are enriched in basic and acidic residues. Serine 1019, serine 1144, and serine 1146 each carry phosphoserine. Disordered stretches follow at residues 1117-1153 (HSINATQPSKPYAEPVRSVREASERRSSDSYPLAPVR) and 1178-1238 (GNEE…VNPM). Residues 1133 to 1144 (RSVREASERRSS) are compositionally biased toward basic and acidic residues. Residues 1258-1261 (PQFV) are interaction with PTPN13/PTPL1.

In terms of assembly, interacts with PTPN13/PTPL1. Interacts with RAP2A via its coiled coil domain. Interacts with RASIP1. Widely expressed. Highly expressed in skeletal muscle and heart. Expressed at intermediate level in placenta, liver and pancreas. Weakly expressed in brain, lung and kidney.

GTPase activator for the Rho-type GTPases by converting them to an inactive GDP-bound state. Has strong activity toward RHOA, and weaker activity toward RAC1 and CDC42. May act as a specific effector of RAP2A to regulate Rho. In concert with RASIP1, suppresses RhoA signaling and dampens ROCK and MYH9 activities in endothelial cells and plays an essential role in blood vessel tubulogenesis. This is Rho GTPase-activating protein 29 (ARHGAP29) from Homo sapiens (Human).